Reading from the N-terminus, the 175-residue chain is Large ribosomal subunit protein uL5 (175 aa).

It belongs to the universal ribosomal protein uL5 family. Part of the 50S ribosomal subunit; contacts the 5S rRNA and probably tRNA. Forms a bridge to the 30S subunit in the 70S ribosome.

Functionally, this is one of the proteins that bind and probably mediate the attachment of the 5S RNA into the large ribosomal subunit, where it forms part of the central protuberance. In the 70S ribosome it contacts protein S13 of the 30S subunit (bridge B1b), connecting the 2 subunits; this bridge is implicated in subunit movement. May contact the P site tRNA; the 5S rRNA and some of its associated proteins might help stabilize positioning of ribosome-bound tRNAs. This chain is Large ribosomal subunit protein uL5, found in Halobacterium salinarum (strain ATCC 29341 / DSM 671 / R1).